We begin with the raw amino-acid sequence, 426 residues long: MISYEPVRGMKDYYGEELHKIKVVENAFLKIVKLAGYQEVETPIVEDFQLFALKGGEELRNTMYVFKDKAGREVALRPEFTPSIVRFYLNSLQHLPKPIRLYYLGTVYRYDEPQFGRYREFRQAGIELLGSSNIYSDLEILQILIEIYRELNLINKIRLKINNISLIRKILNKLNISDNLQEHFLHLIDKGKIDEALSLLPSSEYTELITNILSVNNLDISSYNKIKEDLTEKYNLKDLIQDLDRIMLLKNILDNLGVNSYIDLGFVRGLAYYTGLIFEVLHPSVSFSIAGGGRYDNLVELYGGPQTPAIGFAIGVERTALVLEEPNTVKEKQNKIGVIVLSDEAILYAIRIVDKLRSNNYIATINLKSISISKLIPSYAEEGYSFLIFIGKKEYEDKTITLKNLSTKEQVTIKEENLLDYLKQII.

It belongs to the class-II aminoacyl-tRNA synthetase family.

The protein localises to the cytoplasm. It carries out the reaction tRNA(His) + L-histidine + ATP = L-histidyl-tRNA(His) + AMP + diphosphate + H(+). This Sulfurisphaera tokodaii (strain DSM 16993 / JCM 10545 / NBRC 100140 / 7) (Sulfolobus tokodaii) protein is Histidine--tRNA ligase.